The sequence spans 529 residues: Cytochrome P450 monooxygenase ausG (529 aa).

A helical membrane pass occupies residues 31–51 (LLVVCGLPGLLLLFFVTAILL). Residue C470 coordinates heme.

It belongs to the cytochrome P450 family. Heme is required as a cofactor.

Its subcellular location is the membrane. The protein operates within secondary metabolite biosynthesis; terpenoid biosynthesis. In terms of biological role, cytochrome P450 monooxygenase; part of the gene cluster that mediates the biosynthesis of calidodehydroaustin, a fungal meroterpenoid. The first step of the pathway is the synthesis of 3,5-dimethylorsellinic acid by the polyketide synthase ausA. 3,5-dimethylorsellinic acid is then prenylated by the polyprenyl transferase ausN. Further epoxidation by the FAD-dependent monooxygenase ausM and cyclization by the probable terpene cyclase ausL lead to the formation of protoaustinoid A. Protoaustinoid A is then oxidized to spiro-lactone preaustinoid A3 by the combined action of the FAD-binding monooxygenases ausB and ausC, and the dioxygenase ausE. Acid-catalyzed keto-rearrangement and ring contraction of the tetraketide portion of preaustinoid A3 by ausJ lead to the formation of preaustinoid A4. The aldo-keto reductase ausK, with the help of ausH, is involved in the next step by transforming preaustinoid A4 into isoaustinone which is in turn hydroxylated by the P450 monooxygenase ausI to form austinolide. The cytochrome P450 monooxygenase ausG modifies austinolide to austinol. Austinol is further acetylated to austin by the O-acetyltransferase ausP, which spontaneously changes to dehydroaustin. The cytochrome P450 monooxygenase ausR then converts dehydroaustin is into 7-dehydrodehydroaustin. The hydroxylation catalyzed by ausR permits the O-acetyltransferase ausQ to add an additional acetyl group to the molecule, leading to the formation of acetoxydehydroaustin. The short chain dehydrogenase ausT catalyzes the reduction of the double bond present between carbon atoms 1 and 2 to convert 7-dehydrodehydroaustin into 1,2-dihydro-7-hydroxydehydroaustin. AusQ catalyzes not only an acetylation reaction but also the addition of the PKS ausV diketide product to 1,2-dihydro-7-hydroxydehydroaustin, forming precalidodehydroaustin. Finally, the iron/alpha-ketoglutarate-dependent dioxygenase converts precalidodehydroaustin into calidodehydroaustin. The sequence is that of Cytochrome P450 monooxygenase ausG from Aspergillus calidoustus.